A 93-amino-acid chain; its full sequence is Long neurotoxin 1 (93 aa).

The first 21 residues, 1 to 21, serve as a signal peptide directing secretion; the sequence is MKTLLLTLVVVTIVCLDLGNS. 5 disulfides stabilise this stretch: C24/C42, C35/C63, C48/C52, C67/C78, and C79/C84.

The protein belongs to the three-finger toxin family. Long-chain subfamily. Type II alpha-neurotoxin sub-subfamily. In terms of tissue distribution, expressed by the venom gland.

It localises to the secreted. Functionally, binds with high affinity to muscular (alpha-1/CHRNA1) and neuronal (alpha-7/CHRNA7) nicotinic acetylcholine receptor (nAChR) and inhibits acetylcholine from binding to the receptor, thereby impairing neuromuscular and neuronal transmission. The polypeptide is Long neurotoxin 1 (Tropidechis carinatus (Australian rough-scaled snake)).